Consider the following 424-residue polypeptide: Zinc finger and BTB domain-containing protein 6 (424 aa).

Positions 33–97 constitute a BTB domain; the sequence is CDVSIYINDT…CYTGALEVKR (65 aa). Residue S202 is modified to Phosphoserine. 4 consecutive C2H2-type zinc fingers follow at residues 301 to 323, 326 to 348, 354 to 376, and 382 to 405; these read HQCPRCPRGFLHVENYLRHLKMH, FLCLQCGKTFTQKKNLNRHIRGH, FQCTVCLKTFTAKSTLQDHLNIH, and YKCHCCDMDFKHKSALKKHLTSVH. The disordered stretch occupies residues 402–424; the sequence is TSVHGRSSGEKLSRPDLKRQSLL. Positions 408-424 are enriched in basic and acidic residues; sequence SSGEKLSRPDLKRQSLL.

Widely expressed with highest levels in brain.

It is found in the nucleus. Its function is as follows. May be involved in transcriptional regulation. The polypeptide is Zinc finger and BTB domain-containing protein 6 (ZBTB6) (Homo sapiens (Human)).